Reading from the N-terminus, the 407-residue chain is 45 kDa calcium-binding protein (407 aa).

The signal sequence occupies residues 1-35; it reads MVWSWVAMASRWGPLVGLAPRCLWLLGAVLLMDAS. N-linked (GlcNAc...) asparagine glycosylation occurs at Asn-40. 2 EF-hand domains span residues 98 to 133 and 137 to 172; these read RSRR…KTAE and EAME…SKGH. Ser-99 carries the phosphoserine modification. Ca(2+) contacts are provided by Asp-111, Asn-113, Asp-115, Lys-117, Glu-122, Asp-150, Asp-152, Asp-154, His-156, and Glu-161. Phosphothreonine occurs at positions 193 and 217. A compositionally biased stretch (low complexity) spans 249–259; that stretch reads GSSLAGAPGPG. The segment at 249 to 282 is disordered; the sequence is GSSLAGAPGPGDQRQGPGIAGKSGKVLREPQPGC. Residues Asp-291, Asp-293, Asp-295, Gln-297, and Glu-302 each contribute to the Ca(2+) site. EF-hand domains are found at residues 291–313, 323–358, and 359–394; these read DQDG…TVEN, WVKD…MNEY, and NALN…FTGS. Thr-310 is modified (phosphothreonine). 3 residues coordinate Ca(2+): Asp-336, Asn-338, and Asp-340. Residue Thr-344 is modified to Phosphothreonine. Residues Glu-347, Asp-372, Asn-374, Asn-376, His-378, and Glu-383 each coordinate Ca(2+). A necessary for intracellular retention in Golgi apparatus lumen region spans residues 354-407; the sequence is PMNEYNALNEAKQMIAVADENQNHHLEPEEVLKYSEFFTGSKLVDYARSVHEEF.

This sequence belongs to the CREC family.

It localises to the golgi apparatus lumen. May regulate calcium-dependent activities in the endoplasmic reticulum lumen or post-ER compartment. In Macaca fascicularis (Crab-eating macaque), this protein is 45 kDa calcium-binding protein (SDF4).